Consider the following 157-residue polypeptide: Subgroup A Rous sarcoma virus receptor pg950 (157 aa).

Residues 1 to 19 (MARLLPALLLLLLPGNVTG) form the signal peptide. N-linked (GlcNAc...) asparagine glycosylation is found at N20 and N24. At 20–102 (NGSGNGSLSR…RALPARNHGR (83 aa)) the chain is on the extracellular side. An LDL-receptor class A domain is found at 28–71 (SRCPPGQFRCSEPPGAHGECYPQDWLCDGHPDCDDGRDEWGCGT). Intrachain disulfides connect C30/C47, C37/C60, and C54/C69. N81 carries N-linked (GlcNAc...) asparagine glycosylation. A helical transmembrane segment spans residues 103–125 (MWMLITAVLLCCLVAVGGIAAWG). The Cytoplasmic portion of the chain corresponds to 126 to 157 (KSKAKSRSDIFSLASASKELLVPDKSQADLFS).

In terms of assembly, (Microbial infection) Interacts with Rous sarcoma virus envelope protein; this interaction allows the viral attachment.

Its subcellular location is the membrane. Responsible for susceptibility to the retrovirus subgroup A Rous sarcoma virus. In Coturnix japonica (Japanese quail), this protein is Subgroup A Rous sarcoma virus receptor pg950.